A 156-amino-acid chain; its full sequence is Small ribosomal subunit protein uS7 (156 aa).

This sequence belongs to the universal ribosomal protein uS7 family. In terms of assembly, part of the 30S ribosomal subunit. Contacts proteins S9 and S11.

One of the primary rRNA binding proteins, it binds directly to 16S rRNA where it nucleates assembly of the head domain of the 30S subunit. Is located at the subunit interface close to the decoding center, probably blocks exit of the E-site tRNA. The sequence is that of Small ribosomal subunit protein uS7 from Ruminiclostridium cellulolyticum (strain ATCC 35319 / DSM 5812 / JCM 6584 / H10) (Clostridium cellulolyticum).